We begin with the raw amino-acid sequence, 162 residues long: Transcription antitermination protein NusB (162 aa).

This sequence belongs to the NusB family.

Involved in transcription antitermination. Required for transcription of ribosomal RNA (rRNA) genes. Binds specifically to the boxA antiterminator sequence of the ribosomal RNA (rrn) operons. The chain is Transcription antitermination protein NusB from Xanthomonas euvesicatoria pv. vesicatoria (strain 85-10) (Xanthomonas campestris pv. vesicatoria).